A 353-amino-acid chain; its full sequence is Lysophosphatidic acid receptor 3 (353 aa).

The Extracellular portion of the chain corresponds to 1–31; it reads MNECHYDKHMDFFYNRSNTDTVDDWTGTKLV. Residue asparagine 15 is glycosylated (N-linked (GlcNAc...) asparagine). The chain crosses the membrane as a helical span at residues 32–52; it reads IVLCVGTFFCLFIFFSNSLVI. The Cytoplasmic segment spans residues 53 to 67; the sequence is AAVIKNRKFHFPFYY. The chain crosses the membrane as a helical span at residues 68 to 88; it reads LLANLAAADFFAGIAYVFLMF. At 89–101 the chain is on the extracellular side; that stretch reads NTGPVSKTLTVNR. A helical transmembrane segment spans residues 102–124; the sequence is WFLRQGLLDSSLTASLTNLLVIA. The Cytoplasmic segment spans residues 125 to 146; the sequence is VERHMSIMRMRVHSNLTKKRVT. Residues 147–167 traverse the membrane as a helical segment; it reads LLILLVWAIAIFMGAVPTLGW. Over 168 to 186 the chain is Extracellular; sequence NCLCNISACSSLAPIYSRS. The N-linked (GlcNAc...) asparagine glycan is linked to asparagine 172. The helical transmembrane segment at 187-207 threads the bilayer; it reads YLVFWTVSNLMAFLIMVVVYL. Residues 208-240 are Cytoplasmic-facing; it reads RIYVYVKRKTNVLSPHTSGSISRRRTPMKLMKT. A helical transmembrane segment spans residues 241 to 261; sequence VMTVLGAFVVCWTPGLVVLLL. Over 262–276 the chain is Extracellular; the sequence is DGLNCRQCGVQHVKR. A helical transmembrane segment spans residues 277–297; it reads WFLLLALLNSVVNPIIYSYKD. At 298–353 the chain is on the cytoplasmic side; that stretch reads EDMYGTMKKMICCFSQENPERRPSRIPSTVLSRSDTGSQYIEDSISQGAVCNKSTS. A lipid anchor (S-palmitoyl cysteine) is attached at cysteine 309.

This sequence belongs to the G-protein coupled receptor 1 family. In terms of tissue distribution, most abundantly expressed in prostate, testes, pancreas, and heart, with moderate levels in lung and ovary. No detectable expression in brain, placenta, liver, skeletal muscle, kidney, spleen, thymus, small intestine, colon, or peripheral blood leukocytes.

The protein localises to the cell membrane. Receptor for lysophosphatidic acid (LPA), a mediator of diverse cellular activities. May play a role in the development of ovarian cancer. Seems to be coupled to the G(i)/G(o) and G(q) families of heteromeric G proteins. The chain is Lysophosphatidic acid receptor 3 (LPAR3) from Homo sapiens (Human).